The primary structure comprises 389 residues: Chorismate synthase (389 aa).

Residues Arg40 and Arg46 each coordinate NADP(+). Residues 130–132, 251–252, Gly297, 312–316, and Arg338 each bind FMN; these read RAS, QA, and KPIST.

It belongs to the chorismate synthase family. Homotetramer. It depends on FMNH2 as a cofactor.

It catalyses the reaction 5-O-(1-carboxyvinyl)-3-phosphoshikimate = chorismate + phosphate. Its pathway is metabolic intermediate biosynthesis; chorismate biosynthesis; chorismate from D-erythrose 4-phosphate and phosphoenolpyruvate: step 7/7. Its function is as follows. Catalyzes the anti-1,4-elimination of the C-3 phosphate and the C-6 proR hydrogen from 5-enolpyruvylshikimate-3-phosphate (EPSP) to yield chorismate, which is the branch point compound that serves as the starting substrate for the three terminal pathways of aromatic amino acid biosynthesis. This reaction introduces a second double bond into the aromatic ring system. The protein is Chorismate synthase of Solibacter usitatus (strain Ellin6076).